A 471-amino-acid polypeptide reads, in one-letter code: Intraflagellar transport protein 46 homolog (471 aa).

Disordered stretches follow at residues 1–202 (MSSE…SNMR) and 226–246 (SRLEDDSSNDDDDDDDDEDDD). Composition is skewed to acidic residues over residues 89 to 99 (SEPQEVIDVND) and 231 to 246 (DSSNDDDDDDDDEDDD).

It belongs to the IFT46 family. In terms of assembly, component of the IFT complex B composed of at least che-2, che-13, dyf-1, dyf-3, dyf-6, dyf-11, dyf-13, ift-20, ift-74, ift-81, ifta-2, osm-1, osm-5 and osm-6. In terms of tissue distribution, expressed in the hypodermis and sensory neurons including inner labial, PDE, amphid and phasmid neurons.

It is found in the cell projection. The protein localises to the cilium. Its subcellular location is the cytoplasm. It localises to the cytoskeleton. The protein resides in the cilium basal body. It is found in the dendrite. The protein localises to the perikaryon. Functionally, component of the intraflagellar transport (IFT) complex B required for transport of proteins in the motile cilium. May be required for ciliary entrance and transport of specific ciliary cargo proteins such as che-3 which are related to motility. Required for normal morphology and function of ciliated amphid sensory neurons. This Caenorhabditis elegans protein is Intraflagellar transport protein 46 homolog.